The following is a 359-amino-acid chain: Glutamate 5-kinase (359 aa).

Lys-7 is a binding site for ATP. Substrate contacts are provided by Ser-47, Asp-135, and Asn-147. ATP is bound at residue 202–208 (SGGITSK). The PUA domain maps to 266–343 (KGSIFINEGA…DQLEDVLGYS (78 aa)).

The protein belongs to the glutamate 5-kinase family.

The protein localises to the cytoplasm. It catalyses the reaction L-glutamate + ATP = L-glutamyl 5-phosphate + ADP. Its pathway is amino-acid biosynthesis; L-proline biosynthesis; L-glutamate 5-semialdehyde from L-glutamate: step 1/2. Catalyzes the transfer of a phosphate group to glutamate to form L-glutamate 5-phosphate. The chain is Glutamate 5-kinase from Kosmotoga olearia (strain ATCC BAA-1733 / DSM 21960 / TBF 19.5.1).